The chain runs to 313 residues: Probable GTP 3',8-cyclase (313 aa).

A Radical SAM core domain is found at 4–224 (VYGRELEDLR…EIRNKHKRPR (221 aa)). Residue Arg-13 participates in GTP binding. [4Fe-4S] cluster-binding residues include Cys-20, Cys-24, and Cys-27. Lys-60 contacts GTP. Gly-64 provides a ligand contact to S-adenosyl-L-methionine. Thr-90 is a GTP binding site. Ser-114 serves as a coordination point for S-adenosyl-L-methionine. GTP is bound at residue Lys-151. [4Fe-4S] cluster-binding residues include Cys-244 and Cys-247. GTP is bound at residue 249-251 (RIR). Residue Cys-261 coordinates [4Fe-4S] cluster.

The protein belongs to the radical SAM superfamily. MoaA family. Requires [4Fe-4S] cluster as cofactor.

The enzyme catalyses GTP + AH2 + S-adenosyl-L-methionine = (8S)-3',8-cyclo-7,8-dihydroguanosine 5'-triphosphate + 5'-deoxyadenosine + L-methionine + A + H(+). The protein operates within cofactor biosynthesis; molybdopterin biosynthesis. Its function is as follows. Catalyzes the cyclization of GTP to (8S)-3',8-cyclo-7,8-dihydroguanosine 5'-triphosphate. In Sulfolobus acidocaldarius (strain ATCC 33909 / DSM 639 / JCM 8929 / NBRC 15157 / NCIMB 11770), this protein is Probable GTP 3',8-cyclase.